The chain runs to 242 residues: Endoplasmic reticulum membrane protein complex subunit 7 (242 aa).

A signal peptide spans 1-23 (MAAALWGFFPVLLLLLLSGDVQS). The Lumenal portion of the chain corresponds to 24-159 (SEVPGAAAEG…IKRESWGWTD (136 aa)). Residues 160-180 (FLMNPMVMMMVLPLLIFVLLP) form a helical membrane-spanning segment. At 181 to 242 (KVVNTSDPDM…TGKSGAGKRR (62 aa)) the chain is on the cytoplasmic side. The tract at residues 217–242 (LFSSKSSGKSSSGSSKTGKSGAGKRR) is disordered. Over residues 219 to 235 (SSKSSGKSSSGSSKTGK) the composition is skewed to low complexity.

It belongs to the EMC7 family. As to quaternary structure, component of the ER membrane protein complex (EMC).

The protein resides in the endoplasmic reticulum membrane. In terms of biological role, part of the endoplasmic reticulum membrane protein complex (EMC) that enables the energy-independent insertion into endoplasmic reticulum membranes of newly synthesized membrane proteins. Preferentially accommodates proteins with transmembrane domains that are weakly hydrophobic or contain destabilizing features such as charged and aromatic residues. Involved in the cotranslational insertion of multi-pass membrane proteins in which stop-transfer membrane-anchor sequences become ER membrane spanning helices. It is also required for the post-translational insertion of tail-anchored/TA proteins in endoplasmic reticulum membranes. By mediating the proper cotranslational insertion of N-terminal transmembrane domains in an N-exo topology, with translocated N-terminus in the lumen of the ER, controls the topology of multi-pass membrane proteins like the G protein-coupled receptors. By regulating the insertion of various proteins in membranes, it is indirectly involved in many cellular processes. The chain is Endoplasmic reticulum membrane protein complex subunit 7 (EMC7) from Homo sapiens (Human).